Consider the following 693-residue polypeptide: Sodium-dependent dopamine transporter (693 aa).

The Cytoplasmic segment spans residues 1–56 (MSEGRCSVAHMSSVVAPAKEANAMGPKAVELVLVKEQNGVQLTNSTLLNPPQSPTE). The chain crosses the membrane as a discontinuously helical span at residues 57–95 (AQDRETWSKKADFLLSVIGFAVDLANVWRFPYLCYKNGG). Gly-75, Ala-77, Val-78, Asp-79, and Asn-82 together coordinate Na(+). Asp-79 contacts dopamine. Transmembrane regions (helical) follow at residues 96–127 (GAFLVPYLFFMVVAGVPLFYMELALGQFNREG) and 128–171 (AAGV…LSSF). Dopamine is bound by residues Ser-149 and Gly-153. Residues 172–233 (TTELPWTHCN…SQGIDDLGPP (62 aa)) are Extracellular-facing. Residues Cys-180 and Cys-189 are joined by a disulfide bond. N-linked (GlcNAc...) asparagine glycosylation is found at Asn-181, Asn-196, and Asn-202. Helical transmembrane passes span 234–253 (RWQLTSCLVLVIVLLYFSLW) and 254–284 (KGVKTSGKVVWITATMPYVVLFALLLRGITL). Residues 285-303 (PGAVDAIRAYLSVDFHRLC) lie on the Extracellular side of the membrane. A discontinuously helical transmembrane segment spans residues 304–332 (EASVWIDAAIQICFSLGVGLGVLIAFSSY). Gln-314 is a chloride binding site. Position 317 (Phe-317) interacts with dopamine. Positions 318 and 350 each coordinate Na(+). Ser-318 provides a ligand contact to chloride. A helical membrane pass occupies residues 333 to 373 (NKFTNNCYRDAIITTSVNSLTSFSSGFVVFSFLGYMAQKHS). Position 354 (Ser-354) interacts with chloride. The Extracellular portion of the chain corresponds to 374 to 397 (VPIGDVAKDGPGLIFIIYPEALAT). The next 3 helical transmembrane spans lie at 398–439 (LPLS…QLLH), 440–463 (RHRELFTLLVVLATFLLSLFCVTN), and 464–496 (GGIYVFTLLDHFAAGTSILFGVLMEVIGVAWFY). Na(+) contacts are provided by Leu-415, Asp-418, and Ser-419. Positions 419 and 420 each coordinate dopamine. Over 497–513 (GVWQFSDDIKQMTGRRP) the chain is Cytoplasmic. Residues 514–539 (SLYWRLCWKFVSPCFLLFVVVVSIAT) form a helical membrane-spanning segment. The Extracellular portion of the chain corresponds to 540-550 (FRPPHYGAYVF). The chain crosses the membrane as a helical span at residues 551-580 (PEWATALGWAIAASSMSVVPIYAAYKLCSL). The tract at residues 558–587 (GWAIAASSMSVVPIYAAYKLCSLPGSSREK) is interaction with TGFB1I1. Residues 581-693 (PGSSREKLAY…VESTGLCSVY (113 aa)) lie on the Cytoplasmic side of the membrane.

It belongs to the sodium:neurotransmitter symporter (SNF) (TC 2.A.22) family. SLC6A3 subfamily. As to quaternary structure, monomer. Homooligomer; disulfide-linked. Interacts with PRKCABP and TGFB1I1. Interacts (via N-terminus) with SYNGR3 (via N-terminus). Interacts with SLC18A2. Interacts with TOR1A (ATP-bound); TOR1A regulates SLC6A3 subcellular location. Interacts with alpha-synuclein/SNCA. Interacts with SEPTIN4. Expressed in the neurons of the substantia nigra of the brain.

Its subcellular location is the cell membrane. It is found in the cell projection. It localises to the neuron projection. The protein localises to the axon. It carries out the reaction dopamine(out) + chloride(out) + Na(+)(out) = dopamine(in) + chloride(in) + Na(+)(in). It catalyses the reaction (R)-noradrenaline(out) + chloride(out) + Na(+)(out) = (R)-noradrenaline(in) + chloride(in) + Na(+)(in). The catalysed reaction is dopamine(out) + chloride(out) + 2 Na(+)(out) = dopamine(in) + chloride(in) + 2 Na(+)(in). Its activity is regulated as follows. Inhibited by GBR 12909 dihydrochloride, amphetamine and cocaine. Inhibited by zinc ions. In terms of biological role, mediates sodium- and chloride-dependent transport of dopamine. Also mediates sodium- and chloride-dependent transport of norepinephrine (also known as noradrenaline). Regulator of light-dependent retinal hyaloid vessel regression, downstream of OPN5 signaling. The sequence is that of Sodium-dependent dopamine transporter (SLC6A3) from Bos taurus (Bovine).